Consider the following 436-residue polypeptide: Putative permease MJ0326 (436 aa).

Helical transmembrane passes span 24–44 (LAGITTFMTMAYIIFVNPQIL), 51–71 (FGAVMVATCIASAIATLVMGL), 79–99 (LAPGMGLNAYFTYGVCLGMGI), 103–123 (VALGAVFISGVLFIILTLTKI), 139–159 (TAVGIGLFIAFIGLKSAGIIV), 171–191 (LMEPSTLLALFGIFLTSILVS), 194–214 (VIGAILIGIIVTSLIGMILGI), 235–255 (LDIMGALNLGLLTIVLAFFFV), 322–342 (GFVSVVVAMLFLLSLFFYPVV), 345–365 (IPPYATAAALVIVGALMMRSV), 381–401 (ITLLTIPLTFSIATGLALGFI), and 416–436 (VHWLVYVLAVIFALRFVYLSG).

The protein belongs to the nucleobase:cation symporter-2 (NCS2) (TC 2.A.40) family. Azg-like subfamily.

It localises to the cell membrane. The sequence is that of Putative permease MJ0326 from Methanocaldococcus jannaschii (strain ATCC 43067 / DSM 2661 / JAL-1 / JCM 10045 / NBRC 100440) (Methanococcus jannaschii).